Here is a 226-residue protein sequence, read N- to C-terminus: Regulator of microtubule dynamics protein 1 (226 aa).

It belongs to the FAM82/RMD family. As to quaternary structure, interacts with air-2.

It localises to the cytoplasm. It is found in the cytoskeleton. The protein localises to the spindle pole. Its function is as follows. Acts in chromosome segregation and organization during mitosis. The chain is Regulator of microtubule dynamics protein 1 (rmd-1) from Caenorhabditis elegans.